The following is a 119-amino-acid chain: Ribosome-binding factor A (119 aa).

It belongs to the RbfA family. As to quaternary structure, monomer. Binds 30S ribosomal subunits, but not 50S ribosomal subunits or 70S ribosomes.

It is found in the cytoplasm. In terms of biological role, one of several proteins that assist in the late maturation steps of the functional core of the 30S ribosomal subunit. Associates with free 30S ribosomal subunits (but not with 30S subunits that are part of 70S ribosomes or polysomes). Required for efficient processing of 16S rRNA. May interact with the 5'-terminal helix region of 16S rRNA. This chain is Ribosome-binding factor A, found in Pseudothermotoga lettingae (strain ATCC BAA-301 / DSM 14385 / NBRC 107922 / TMO) (Thermotoga lettingae).